A 345-amino-acid polypeptide reads, in one-letter code: Viral Fc-gamma receptor-like protein UL119 (345 aa).

A signal peptide spans 1-23 (MCSVLAIALVVALLGDMHPGVKS). A disordered region spans residues 23–43 (SSTTSAVTSPSNTTVTSTTSI). Over 24–293 (STTSAVTSPS…IKSDPLFEDR (270 aa)) the chain is Virion surface. N-linked (GlcNAc...) asparagine; by host glycans are attached at residues asparagine 34, asparagine 48, asparagine 95, asparagine 104, asparagine 148, asparagine 179, asparagine 198, asparagine 217, asparagine 225, asparagine 241, asparagine 244, and asparagine 260. The Ig-like V-type domain occupies 91 to 190 (QVSLNATCKV…TWDLFTYPIY (100 aa)). A helical membrane pass occupies residues 294–314 (LLAYGVLAFLVFMVIILLYVT). The Intravirion portion of the chain corresponds to 315–345 (YMLARRRDWSYKRLEEPVEEKKHPVPYFKQW).

It is found in the virion membrane. Serves as a receptor for the Fc part of human IgG. May thus be involved in interfering with host Ig-mediated immune responses. The sequence is that of Viral Fc-gamma receptor-like protein UL119 (UL119/UL118) from Homo sapiens (Human).